The primary structure comprises 652 residues: Zinc finger protein 432 (652 aa).

The 72-residue stretch at 8-79 folds into the KRAB domain; the sequence is LTLEDVTVEF…EDERHSRICP (72 aa). Tyr-41 is subject to 3'-nitrotyrosine. ADP-ribosylserine occurs at positions 139 and 164. 16 consecutive C2H2-type zinc fingers follow at residues 205-227, 233-255, 261-283, 289-311, 317-339, 345-367, 373-395, 401-423, 429-451, 457-479, 485-507, 513-535, 541-563, 567-591, 597-619, and 625-647; these read HVCS…ERVH, YGCT…QRIH, FICS…QRTH, YICN…QRNH, YICS…QRTH, YICS…QRNH, YICN…QRTH, YLCS…QRTH, YTCS…QRTH, YRCS…QRTH, FMCS…QQIH, KSCI…KQVH, YGCN…QRTH, and FVCS…QRTH. At Ser-246 the chain carries ADP-ribosylserine. The residue at position 330 (Ser-330) is an ADP-ribosylserine. Position 414 is an ADP-ribosylserine (Ser-414).

It belongs to the krueppel C2H2-type zinc-finger protein family. As to quaternary structure, interacts with PARP1 and several chromatin remodeling proteins; the interaction with PARP1 reshapes ZNF432 interacting proteins. Interacts with TRIM28; the interaction is independent of PARP1.

The protein resides in the nucleus. Homologous recombination repressor that functions as a poly(ADP-ribose) (PAR) reader regulating DNA damage response and PARP inhibition. Once recruited to DNA lesions via DNA-, in a PAR-dependent mechanism, stimulates PARP1 activity. Binds preferentially ssDNA and inhibits EXO1-mediated resection, probably through a PAR-independent DNA-binding mechanism. This is Zinc finger protein 432 from Homo sapiens (Human).